Here is a 247-residue protein sequence, read N- to C-terminus: Flagellar brake protein YcgR 2 (247 aa).

Residues 124–237 (QRREYFRVET…DETRIQRYIA (114 aa)) form the PilZ domain.

The protein belongs to the YcgR family. As to quaternary structure, monomer. Interacts with the flagellar basal bodies.

The protein resides in the bacterial flagellum basal body. Functionally, acts as a flagellar brake, regulating swimming and swarming in a bis-(3'-5') cyclic diguanylic acid (c-di-GMP)-dependent manner. Binds 1 c-di-GMP dimer per subunit. Increasing levels of c-di-GMP lead to decreased motility. This is Flagellar brake protein YcgR 2 from Dechloromonas aromatica (strain RCB).